The primary structure comprises 309 residues: tRNA dimethylallyltransferase (309 aa).

13 to 20 (GPTAVGKS) serves as a coordination point for ATP. Position 15–20 (15–20 (TAVGKS)) interacts with substrate.

The protein belongs to the IPP transferase family. Monomer. The cofactor is Mg(2+).

It catalyses the reaction adenosine(37) in tRNA + dimethylallyl diphosphate = N(6)-dimethylallyladenosine(37) in tRNA + diphosphate. Catalyzes the transfer of a dimethylallyl group onto the adenine at position 37 in tRNAs that read codons beginning with uridine, leading to the formation of N6-(dimethylallyl)adenosine (i(6)A). This chain is tRNA dimethylallyltransferase, found in Lacticaseibacillus casei (strain BL23) (Lactobacillus casei).